A 549-amino-acid chain; its full sequence is Teichoic acids export ATP-binding protein TagH (549 aa).

An ABC transporter domain is found at 22–243 (DKLKDLFRKQ…YRAFLKEYNQ (222 aa)). Residue 57-64 (GLNGSGKS) participates in ATP binding. Residues 244–549 (MSMEDRKKFQ…EIQSISIVKK (306 aa)) form a unknown region. Residues 346-415 (ENMYMVKSNG…VSTKFIEPFK (70 aa)) form the SH3b domain.

The protein belongs to the ABC transporter superfamily. Teichoic acids exporter (TC 3.A.1.104.1) family. As to quaternary structure, the complex is composed of two ATP-binding proteins (TagH) and two transmembrane proteins (TagG).

It localises to the cell membrane. It catalyses the reaction ATP + H2O + teichoic acidSide 1 = ADP + phosphate + teichoic acidSide 2.. Its function is as follows. Part of the ABC transporter complex TagGH involved in teichoic acids export. Responsible for energy coupling to the transport system. This chain is Teichoic acids export ATP-binding protein TagH, found in Bacillus cereus (strain ZK / E33L).